Here is a 351-residue protein sequence, read N- to C-terminus: UPF0421 protein BC_2748 (351 aa).

4 helical membrane-spanning segments follow: residues 19 to 39 (IAVF…IFAV), 74 to 94 (FTFF…FTIV), 109 to 129 (TLTA…AFLI), and 131 to 151 (LATT…IFPP).

Belongs to the UPF0421 family.

It is found in the cell membrane. The sequence is that of UPF0421 protein BC_2748 from Bacillus cereus (strain ATCC 14579 / DSM 31 / CCUG 7414 / JCM 2152 / NBRC 15305 / NCIMB 9373 / NCTC 2599 / NRRL B-3711).